A 348-amino-acid polypeptide reads, in one-letter code: D-lactate dehydrogenase kk1H (348 aa).

NAD(+)-binding positions include 158-159, Asp-178, 208-209, 235-237, and Asp-261; these read RI, CP, and TSR. Residue Arg-237 is part of the active site. Glu-266 is an active-site residue. The Proton donor role is filled by His-298.

Belongs to the D-isomer specific 2-hydroxyacid dehydrogenase family.

The protein operates within secondary metabolite biosynthesis. Its function is as follows. D-lactate dehydrogenase; part of the gene cluster that mediates the biosynthesis of KK-1, a novel cyclic depsipeptide with 10 residues which is a promising active compound with high activity against many plant pathogens, especially Botrytis cinerea. Within the pathway, kk1H catalyzes in the synthesis of D-lactic acid from pyruvic acid, which is recognized by the A domain of the first kk1B module. The nonribosomal peptide synthetase (NRPS) kk1B catalyzes the elongation and cyclization of the decapeptide chain composed of 1 D-lactic acid residue (D-Lac), 1 pipecolic acid residue (Pip), 1 aspartic acid residue (Asp), 1 isoleucine residue (Ile), 1 glycine residue (Gly), 1 tyrosine residue (Tyr) and 4 valine residues (Val). The Asp, Ile and 3 Val residues are N-methylated by the 5 methyltransferase domains from the NRPS (found in modules 3, 5, 6, 7 and 9), whereas the Tyr residue is O-methylated by the cluster encoded O-methyltransferase kk1A. The thioesterase kk1J is likely to be involved in the corrective mechanism of peptide chain synthesis. The D-lactate dehydrogenase kk1H is involved in the synthesis of D-lactic acid from pyruvic acid, which is recognized by the A domain of the first kk1B module. The pyrroline-5-carboxylate reductase kk1I is involved in the synthesis of the L-pipecolic acid residue of KK-1 from delta-1-pyrroline-5-carboxylate (P5C), a metabolic intermediate of lysine. It still is unclear how kk1C and kk1D are involved in the production of KK-1. In Curvularia clavata, this protein is D-lactate dehydrogenase kk1H.